A 206-amino-acid chain; its full sequence is Small ribosomal subunit protein uS4 (206 aa).

The 61-residue stretch at 96 to 156 (CRLDNVVYRM…EKAKNQLRIV (61 aa)) folds into the S4 RNA-binding domain.

Belongs to the universal ribosomal protein uS4 family. In terms of assembly, part of the 30S ribosomal subunit. Contacts protein S5. The interaction surface between S4 and S5 is involved in control of translational fidelity.

Its function is as follows. One of the primary rRNA binding proteins, it binds directly to 16S rRNA where it nucleates assembly of the body of the 30S subunit. Functionally, with S5 and S12 plays an important role in translational accuracy. The sequence is that of Small ribosomal subunit protein uS4 from Pseudomonas fluorescens (strain Pf0-1).